The primary structure comprises 723 residues: Dipeptidyl aminopeptidase BI (723 aa).

An N-terminal signal peptide occupies residues Met-1 to Ala-23. Residues Ser-574, Asp-659, and His-694 each act as charge relay system in the active site.

This sequence belongs to the peptidase S9A family. Monomer.

Its activity is regulated as follows. Nearly completely inhibited by 0.5 mM ZnCl(2), 0.1 mM N-tosyl-L-lysyl chloromethyl ketone (TLCK) and 0.1 mM leupeptin. Strongly inhibited by 0.5 mM CoCl(2) and 0.1 mM chymostatin. Activity is hardly affected by general serine protease inhibitors phenylmethanesulfonyl fluoride (PMSF), diisopropyl fluorophosphate (DFP) and N-tosyl-L-phenyl-alanyl chloromethyl ketone (TPCK) or by aspartyl protease inhibitor pepstatin A or by CaCl(2) and EDTA. Cysteine protease inhibitors, such as N-ethylmaleimide (NEM), iodoacetic acid and L-trans-epoxysuccinyl-leucylamido(4-guanido)butane (E-64) have no effect on activity. Its function is as follows. Sequentially removes dipeptide units (NH3-P2-P1-) from the amino termini of peptides and proteins. Is able to catalyze the removal of Asp-Arg from the amino termini of angiotensins I and II. Has slight endopeptidase activity on N-terminally blocked peptide derivatives which contain arginine residues at the P1 position. Does not hydrolyze Ala-Ala-Ala and Ala-Ala-Ala-Ala substrates or insulin beta chain. In Pseudoxanthomonas mexicana, this protein is Dipeptidyl aminopeptidase BI.